The sequence spans 33 residues: Brevinin-2E (33 aa).

A disulfide bridge links Cys-27 with Cys-33.

Belongs to the frog skin active peptide (FSAP) family. Brevinin subfamily. In terms of tissue distribution, expressed by the skin glands.

It is found in the secreted. In terms of biological role, shows antibacterial activity against representative Gram-negative and Gram-positive bacterial species, and hemolytic activity. The polypeptide is Brevinin-2E (Pelophylax lessonae (Pool frog)).